We begin with the raw amino-acid sequence, 298 residues long: GTPase Era (298 aa).

Residues 3–170 form the Era-type G domain; the sequence is KSGFVAILGR…VQLLKDNLEE (168 aa). The tract at residues 11 to 18 is G1; it reads GRPNVGKS. 11-18 contributes to the GTP binding site; the sequence is GRPNVGKS. Positions 37–41 are G2; it reads QTTRN. The tract at residues 58 to 61 is G3; it reads DTPG. GTP contacts are provided by residues 58–62 and 120–123; these read DTPGI and NKID. Residues 120–123 are G4; it reads NKID. Residues 149 to 151 form a G5 region; it reads ISA. The KH type-2 domain occupies 201–279; the sequence is TQQEVPHSVA…YLETWVKVKK (79 aa).

It belongs to the TRAFAC class TrmE-Era-EngA-EngB-Septin-like GTPase superfamily. Era GTPase family. Monomer.

It is found in the cytoplasm. The protein resides in the cell membrane. In terms of biological role, an essential GTPase that binds both GDP and GTP, with rapid nucleotide exchange. Plays a role in 16S rRNA processing and 30S ribosomal subunit biogenesis and possibly also in cell cycle regulation and energy metabolism. This chain is GTPase Era, found in Streptococcus equi subsp. zooepidemicus (strain MGCS10565).